A 165-amino-acid chain; its full sequence is Transcription antitermination protein NusB (165 aa).

This sequence belongs to the NusB family.

In terms of biological role, involved in transcription antitermination. Required for transcription of ribosomal RNA (rRNA) genes. Binds specifically to the boxA antiterminator sequence of the ribosomal RNA (rrn) operons. The protein is Transcription antitermination protein NusB of Bradyrhizobium diazoefficiens (strain JCM 10833 / BCRC 13528 / IAM 13628 / NBRC 14792 / USDA 110).